The primary structure comprises 346 residues: MDFLSKHTTCLSNLELNLAPGWQTVSAYFLLAAGSLFVASRALTFVRVLLSLFVLPGKSLRSFGPKGSWAVVTGASDGLGKEFSLQLARAGFNIVLVSRTASKLTTLSDEITSKYASVQTKTLAMDFARNEDSDYEKLKALVDELDVAILVNNVGKSHDIPTPFALTSQEEMTDIITINCMGTLRATQLIVPGMMQRKRGLILTMGSFGGLLPTPLLATYSGSKAFLQQWSTALGSELEEHGITVELVQAYLITSAMSKIRRASATIPDPRSFVKSVLSKIGRNGGSPSYAYSSSPYWSHGLMAYFLTCIAGTMGKFVTSKNRGMHESIRKRALRKAEREKAKKST.

The helical transmembrane segment at 26 to 46 (SAYFLLAAGSLFVASRALTFV) threads the bilayer. NADP(+) is bound by residues Val-71, Asp-126, Asp-134, Asn-153, Tyr-220, Lys-224, Ile-253, and Ser-255. Tyr-220 (proton donor) is an active-site residue. Lys-224 functions as the Lowers pKa of active site Tyr in the catalytic mechanism.

It belongs to the short-chain dehydrogenases/reductases (SDR) family.

Its subcellular location is the endoplasmic reticulum membrane. It catalyses the reaction a very-long-chain (3R)-3-hydroxyacyl-CoA + NADP(+) = a very-long-chain 3-oxoacyl-CoA + NADPH + H(+). It functions in the pathway lipid metabolism; fatty acid biosynthesis. Component of the microsomal membrane bound fatty acid elongation system, which produces the 26-carbon very long-chain fatty acids (VLCFA) from palmitate. Catalyzes the reduction of the 3-ketoacyl-CoA intermediate that is formed in each cycle of fatty acid elongation. VLCFAs serve as precursors for ceramide and sphingolipids. The sequence is that of Very-long-chain 3-oxoacyl-CoA reductase from Aspergillus oryzae (strain ATCC 42149 / RIB 40) (Yellow koji mold).